The primary structure comprises 99 residues: Late cornified envelope protein 4A (99 aa).

A disordered region spans residues 78-99; sequence CYGSGSGQQSGGSGCCSGGGCC. Residues 81-99 show a composition bias toward gly residues; the sequence is SGSGQQSGGSGCCSGGGCC.

The protein belongs to the LCE family. As to quaternary structure, interacts with CYSRT1; the interaction is direct. Skin-specific. Expression was readily detected in adult trunk skin, adult arm skin, fetal skin, penal skin, vulva, esophagus and tongue. Not expressed in the cervix, rectum, lung, colon, or placenta.

In terms of biological role, precursors of the cornified envelope of the stratum corneum. This is Late cornified envelope protein 4A (LCE4A) from Homo sapiens (Human).